The chain runs to 465 residues: Ribosomal oxygenase 2 (465 aa).

Residues Gln139–Ser271 enclose the JmjC domain. Fe cation contacts are provided by His179, Asp181, and His240. A Phosphoserine modification is found at Ser309.

Belongs to the ROX family. MINA53 subfamily. Requires Fe(2+) as cofactor.

The protein localises to the nucleus. The protein resides in the nucleolus. The catalysed reaction is L-histidyl-[ribosomal protein uL15] + 2-oxoglutarate + O2 = (3S)-3-hydroxy-L-histidyl-[ribosomal protein uL15] + succinate + CO2. The enzyme catalyses L-histidyl-[protein] + 2-oxoglutarate + O2 = (3S)-3-hydroxy-L-histidyl-[protein] + succinate + CO2. Its function is as follows. Oxygenase that can act as both a histone lysine demethylase and a ribosomal histidine hydroxylase. Is involved in the demethylation of trimethylated 'Lys-9' on histone H3 (H3K9me3), leading to an increase in ribosomal RNA expression. Also catalyzes the hydroxylation of 60S ribosomal protein L27a on 'His-39'. May play an important role in cell growth and survival. May be involved in ribosome biogenesis, most likely during the assembly process of pre-ribosomal particles. This chain is Ribosomal oxygenase 2, found in Rattus norvegicus (Rat).